We begin with the raw amino-acid sequence, 320 residues long: Cytochrome f (320 aa).

The first 35 residues, 1–35, serve as a signal peptide directing secretion; it reads MQIRNTFSSLKGEITRFISVSLMIYIITRASISNA. Tyr36, Cys56, Cys59, and His60 together coordinate heme. The chain crosses the membrane as a helical span at residues 286–306; it reads VQGLLFFLASVVLAQIFLVLK.

It belongs to the cytochrome f family. In terms of assembly, the 4 large subunits of the cytochrome b6-f complex are cytochrome b6, subunit IV (17 kDa polypeptide, petD), cytochrome f and the Rieske protein, while the 4 small subunits are PetG, PetL, PetM and PetN. The complex functions as a dimer. Heme serves as cofactor.

It is found in the plastid. The protein localises to the chloroplast thylakoid membrane. Its function is as follows. Component of the cytochrome b6-f complex, which mediates electron transfer between photosystem II (PSII) and photosystem I (PSI), cyclic electron flow around PSI, and state transitions. The protein is Cytochrome f of Citrus sinensis (Sweet orange).